A 340-amino-acid polypeptide reads, in one-letter code: Ketol-acid reductoisomerase (NADP(+)) (340 aa).

In terms of domain architecture, KARI N-terminal Rossmann spans 1 to 182; it reads MRVYYDRDCD…GGGRSGIIET (182 aa). Residues 24-27, Arg-48, Ser-51, Ser-53, and 83-86 each bind NADP(+); these read YGSQ and DELQ. His-108 is a catalytic residue. Gly-134 contributes to the NADP(+) binding site. One can recognise a KARI C-terminal knotted domain in the interval 183–329; the sequence is NFRQECETDL…EKLRGMMPWI (147 aa). Mg(2+)-binding residues include Asp-191, Glu-195, Glu-227, and Glu-231. Ser-252 provides a ligand contact to substrate.

It belongs to the ketol-acid reductoisomerase family. Mg(2+) serves as cofactor.

It catalyses the reaction (2R)-2,3-dihydroxy-3-methylbutanoate + NADP(+) = (2S)-2-acetolactate + NADPH + H(+). It carries out the reaction (2R,3R)-2,3-dihydroxy-3-methylpentanoate + NADP(+) = (S)-2-ethyl-2-hydroxy-3-oxobutanoate + NADPH + H(+). The protein operates within amino-acid biosynthesis; L-isoleucine biosynthesis; L-isoleucine from 2-oxobutanoate: step 2/4. Its pathway is amino-acid biosynthesis; L-valine biosynthesis; L-valine from pyruvate: step 2/4. Involved in the biosynthesis of branched-chain amino acids (BCAA). Catalyzes an alkyl-migration followed by a ketol-acid reduction of (S)-2-acetolactate (S2AL) to yield (R)-2,3-dihydroxy-isovalerate. In the isomerase reaction, S2AL is rearranged via a Mg-dependent methyl migration to produce 3-hydroxy-3-methyl-2-ketobutyrate (HMKB). In the reductase reaction, this 2-ketoacid undergoes a metal-dependent reduction by NADPH to yield (R)-2,3-dihydroxy-isovalerate. This Cereibacter sphaeroides (strain ATCC 17023 / DSM 158 / JCM 6121 / CCUG 31486 / LMG 2827 / NBRC 12203 / NCIMB 8253 / ATH 2.4.1.) (Rhodobacter sphaeroides) protein is Ketol-acid reductoisomerase (NADP(+)).